The following is a 287-amino-acid chain: Eukaryotic translation initiation factor 3 subunit G (287 aa).

Disordered regions lie at residues 1 to 34 and 159 to 184; these read MSKLANRADWADDEEFDDPSALPAQQVTTNKDGT and TAGGAGEDDEAAAGAVGTGSGSYVPP. The RRM domain occupies 207-285; the sequence is ATLRVTNVSE…LILRVEFAKR (79 aa).

Belongs to the eIF-3 subunit G family. In terms of assembly, component of the eukaryotic translation initiation factor 3 (eIF-3) complex.

The protein localises to the cytoplasm. Its function is as follows. RNA-binding component of the eukaryotic translation initiation factor 3 (eIF-3) complex, which is involved in protein synthesis of a specialized repertoire of mRNAs and, together with other initiation factors, stimulates binding of mRNA and methionyl-tRNAi to the 40S ribosome. The eIF-3 complex specifically targets and initiates translation of a subset of mRNAs involved in cell proliferation. This subunit can bind 18S rRNA. This is Eukaryotic translation initiation factor 3 subunit G (tif35) from Aspergillus oryzae (strain ATCC 42149 / RIB 40) (Yellow koji mold).